A 313-amino-acid chain; its full sequence is Methionyl-tRNA formyltransferase (313 aa).

109-112 serves as a coordination point for (6S)-5,6,7,8-tetrahydrofolate; sequence SLLP.

This sequence belongs to the Fmt family.

It carries out the reaction L-methionyl-tRNA(fMet) + (6R)-10-formyltetrahydrofolate = N-formyl-L-methionyl-tRNA(fMet) + (6S)-5,6,7,8-tetrahydrofolate + H(+). Its function is as follows. Attaches a formyl group to the free amino group of methionyl-tRNA(fMet). The formyl group appears to play a dual role in the initiator identity of N-formylmethionyl-tRNA by promoting its recognition by IF2 and preventing the misappropriation of this tRNA by the elongation apparatus. The sequence is that of Methionyl-tRNA formyltransferase from Thermotoga sp. (strain RQ2).